Here is a 323-residue protein sequence, read N- to C-terminus: MVDFSKELRALVQSPHSQWLDTLAPQLTAFKNNPHGNLKRWQRVLTQLPNLTAKHVKLSNTVQVGEADEASDADRARLTGLLQQLQPWRKGPFDLFGVFIDTEWRSDWKWQRVAPHLDDLSGRQVLDVGCGSGYHLWRMLEAGAEQVWGIDPGELFLMQFRAISQLMPLSWQQRAHFFPVGIEHMPELKSFDTVFSMGVLYHRRSPVEFLQQLKSLIRPGGQLVLETIVVEGDETTVMMPGERYAQMRNVWFLPSASALSVWLERLGFKDISVVDHNTTSIDEQRRTDWMTGESLADFLDPNDTNKTIEGYQAPIRAVITARV.

Carboxy-S-adenosyl-L-methionine-binding positions include K90, W104, K109, G129, I182–E183, M197, Y201, and R316.

This sequence belongs to the class I-like SAM-binding methyltransferase superfamily. CmoB family. As to quaternary structure, homotetramer.

The catalysed reaction is carboxy-S-adenosyl-L-methionine + 5-hydroxyuridine(34) in tRNA = 5-carboxymethoxyuridine(34) in tRNA + S-adenosyl-L-homocysteine + H(+). Functionally, catalyzes carboxymethyl transfer from carboxy-S-adenosyl-L-methionine (Cx-SAM) to 5-hydroxyuridine (ho5U) to form 5-carboxymethoxyuridine (cmo5U) at position 34 in tRNAs. The polypeptide is tRNA U34 carboxymethyltransferase (Idiomarina loihiensis (strain ATCC BAA-735 / DSM 15497 / L2-TR)).